A 123-amino-acid chain; its full sequence is MMTKEQIIEAVKNMTVLELNELVKAIEEEFGVTAAAPVVVAGGAAAGAEAAAEKTEFDVILADAGAQKIKVIKVVREITGLGLKEAKDLVDNTPKPIKEGIAKEEAEEIKAKLEEAGAKVEIK.

This sequence belongs to the bacterial ribosomal protein bL12 family. As to quaternary structure, homodimer. Part of the ribosomal stalk of the 50S ribosomal subunit. Forms a multimeric L10(L12)X complex, where L10 forms an elongated spine to which 2 to 4 L12 dimers bind in a sequential fashion. Binds GTP-bound translation factors.

In terms of biological role, forms part of the ribosomal stalk which helps the ribosome interact with GTP-bound translation factors. Is thus essential for accurate translation. The sequence is that of Large ribosomal subunit protein bL12 from Geobacillus kaustophilus (strain HTA426).